A 424-amino-acid polypeptide reads, in one-letter code: Probable carboxypeptidase AN5749 (424 aa).

An N-terminal signal peptide occupies residues 1 to 17; it reads MNLSILAALALVSFSTA. Asn-58 is a glycosylation site (N-linked (GlcNAc...) asparagine). Asp-139 contacts Zn(2+). The active-site Proton acceptor is Glu-171. Zn(2+) is bound at residue Glu-172. Residues Asn-184 and Asn-323 are each glycosylated (N-linked (GlcNAc...) asparagine).

Belongs to the peptidase M20A family. The cofactor is Zn(2+).

Its subcellular location is the secreted. This is Probable carboxypeptidase AN5749 from Emericella nidulans (strain FGSC A4 / ATCC 38163 / CBS 112.46 / NRRL 194 / M139) (Aspergillus nidulans).